The following is a 267-amino-acid chain: Meiosis-specific protein ISC10 (267 aa).

The segment covering Met-1–Gln-13 has biased composition (basic and acidic residues). The disordered stretch occupies residues Met-1 to Leu-26. A compositionally biased stretch (polar residues) spans Thr-14–Phe-25.

Its function is as follows. Indispensable for spore formation. The polypeptide is Meiosis-specific protein ISC10 (ISC10) (Saccharomyces cerevisiae (strain ATCC 204508 / S288c) (Baker's yeast)).